Reading from the N-terminus, the 552-residue chain is uncharacterized protein (552 aa).

Positions 8-200 (KLFADMIIQG…LLCVYEGFLK (193 aa)) constitute a DhaL domain.

This is an uncharacterized protein from Staphylococcus epidermidis (strain ATCC 35984 / DSM 28319 / BCRC 17069 / CCUG 31568 / BM 3577 / RP62A).